A 439-amino-acid chain; its full sequence is Large ribosomal subunit protein mL65 (439 aa).

It belongs to the mitochondrion-specific ribosomal protein mL65 family. As to quaternary structure, component of the mitochondrial large ribosomal subunit (mt-LSU). Mature mammalian 55S mitochondrial ribosomes consist of a small (28S) and a large (39S) subunit. The 28S small subunit contains a 12S ribosomal RNA (12S mt-rRNA) and 30 different proteins. The 39S large subunit contains a 16S rRNA (16S mt-rRNA), a copy of mitochondrial valine transfer RNA (mt-tRNA(Val)), which plays an integral structural role, and 52 different proteins. mL65 forms a heterodimer with mL37. As to expression, heart, skeletal muscle, kidney and liver. Lower expression in placenta and peripheral blood leukocytes.

Its subcellular location is the mitochondrion. The polypeptide is Large ribosomal subunit protein mL65 (MRPS30) (Homo sapiens (Human)).